We begin with the raw amino-acid sequence, 317 residues long: L-lactate dehydrogenase (317 aa).

Residues V17, D38, K43, Y69, and G83–A84 each bind NAD(+). The substrate site is built by Q86 and R92. NAD(+) contacts are provided by residues S105, A122 to N124, and S147. Position 124-127 (N124–D127) interacts with substrate. Residue D152 to R155 participates in substrate binding. Residues R157 and H172 each contribute to the beta-D-fructose 1,6-bisphosphate site. The Proton acceptor role is filled by H179. At Y224 the chain carries Phosphotyrosine. T233 contributes to the substrate binding site.

This sequence belongs to the LDH/MDH superfamily. LDH family. Homotetramer.

The protein localises to the cytoplasm. It carries out the reaction (S)-lactate + NAD(+) = pyruvate + NADH + H(+). Its pathway is fermentation; pyruvate fermentation to lactate; (S)-lactate from pyruvate: step 1/1. Allosterically activated by fructose 1,6-bisphosphate (FBP). In terms of biological role, catalyzes the conversion of lactate to pyruvate. This chain is L-lactate dehydrogenase, found in Geobacillus thermodenitrificans (strain NG80-2).